The primary structure comprises 381 residues: Queuine tRNA-ribosyltransferase (381 aa).

Aspartate 92 acts as the Proton acceptor in catalysis. Residues 92-96, aspartate 146, glutamine 190, and glycine 217 contribute to the substrate site; that span reads DSGGF. Residues 248–254 form an RNA binding region; the sequence is GVGRPED. Aspartate 267 serves as the catalytic Nucleophile. Residues 272-276 form an RNA binding; important for wobble base 34 recognition region; it reads TRNAR. Zn(2+) contacts are provided by cysteine 305, cysteine 307, cysteine 310, and histidine 337.

Belongs to the queuine tRNA-ribosyltransferase family. In terms of assembly, homodimer. Within each dimer, one monomer is responsible for RNA recognition and catalysis, while the other monomer binds to the replacement base PreQ1. The cofactor is Zn(2+).

The catalysed reaction is 7-aminomethyl-7-carbaguanine + guanosine(34) in tRNA = 7-aminomethyl-7-carbaguanosine(34) in tRNA + guanine. It participates in tRNA modification; tRNA-queuosine biosynthesis. Functionally, catalyzes the base-exchange of a guanine (G) residue with the queuine precursor 7-aminomethyl-7-deazaguanine (PreQ1) at position 34 (anticodon wobble position) in tRNAs with GU(N) anticodons (tRNA-Asp, -Asn, -His and -Tyr). Catalysis occurs through a double-displacement mechanism. The nucleophile active site attacks the C1' of nucleotide 34 to detach the guanine base from the RNA, forming a covalent enzyme-RNA intermediate. The proton acceptor active site deprotonates the incoming PreQ1, allowing a nucleophilic attack on the C1' of the ribose to form the product. After dissociation, two additional enzymatic reactions on the tRNA convert PreQ1 to queuine (Q), resulting in the hypermodified nucleoside queuosine (7-(((4,5-cis-dihydroxy-2-cyclopenten-1-yl)amino)methyl)-7-deazaguanosine). This Xanthomonas oryzae pv. oryzae (strain MAFF 311018) protein is Queuine tRNA-ribosyltransferase.